We begin with the raw amino-acid sequence, 235 residues long: Phosphoribosylaminoimidazole-succinocarboxamide synthase (235 aa).

Belongs to the SAICAR synthetase family.

It catalyses the reaction 5-amino-1-(5-phospho-D-ribosyl)imidazole-4-carboxylate + L-aspartate + ATP = (2S)-2-[5-amino-1-(5-phospho-beta-D-ribosyl)imidazole-4-carboxamido]succinate + ADP + phosphate + 2 H(+). The protein operates within purine metabolism; IMP biosynthesis via de novo pathway; 5-amino-1-(5-phospho-D-ribosyl)imidazole-4-carboxamide from 5-amino-1-(5-phospho-D-ribosyl)imidazole-4-carboxylate: step 1/2. The sequence is that of Phosphoribosylaminoimidazole-succinocarboxamide synthase from Chlorobaculum tepidum (strain ATCC 49652 / DSM 12025 / NBRC 103806 / TLS) (Chlorobium tepidum).